Consider the following 357-residue polypeptide: Aminomethyltransferase (357 aa).

The protein belongs to the GcvT family. The glycine cleavage system is composed of four proteins: P, T, L and H.

The catalysed reaction is N(6)-[(R)-S(8)-aminomethyldihydrolipoyl]-L-lysyl-[protein] + (6S)-5,6,7,8-tetrahydrofolate = N(6)-[(R)-dihydrolipoyl]-L-lysyl-[protein] + (6R)-5,10-methylene-5,6,7,8-tetrahydrofolate + NH4(+). Its function is as follows. The glycine cleavage system catalyzes the degradation of glycine. The protein is Aminomethyltransferase of Deinococcus deserti (strain DSM 17065 / CIP 109153 / LMG 22923 / VCD115).